The sequence spans 264 residues: Signal peptidase I (264 aa).

Over 1–18 (MNRDNTKTNKTVKQEFAS) the chain is Cytoplasmic. A helical transmembrane segment spans residues 19 to 39 (FTFVICIALVIRILIMEPFTV). Over 40–264 (PTGSMKATIL…IFKNLYNVDE (225 aa)) the chain is Periplasmic. Active-site residues include serine 43 and lysine 106.

Belongs to the peptidase S26 family.

The protein localises to the cell inner membrane. It catalyses the reaction Cleavage of hydrophobic, N-terminal signal or leader sequences from secreted and periplasmic proteins.. Its function is as follows. Complements E.coli mutants temperature-sensitive for LepB function. The chain is Signal peptidase I (lepB) from Rickettsia typhi (strain ATCC VR-144 / Wilmington).